We begin with the raw amino-acid sequence, 559 residues long: Chromatin assembly factor 1 subunit B (559 aa).

7 WD repeats span residues 11-54, 64-103, 127-166, 169-208, 228-279, 299-340, and 344-385; these read HNKE…DGKA, RHTK…EPEQ, GHLE…KISI, EHKS…VAFN, FHDD…RPIA, ELRP…PFGY, and IHYH…IPLK. The segment at 386 to 559 is disordered; that stretch reads EKPVLNMRTP…NKGGTESLDP (174 aa). Position 394 is a phosphothreonine (Thr-394). Ser-409 carries the phosphoserine modification. Thr-419 is subject to Phosphothreonine. Phosphoserine is present on Ser-429. The segment covering 430–444 has biased composition (low complexity); the sequence is PGTTPPQARQAPAPT. Phosphothreonine is present on Thr-433. A Phosphoserine modification is found at Ser-458. Positions 469 to 495 are enriched in polar residues; sequence LQPSSQNTKAHPSRRVTLNTLQAWSKT. An N6-acetyllysine modification is found at Lys-494. A phosphothreonine mark is found at Thr-495, Thr-509, Thr-521, and Thr-531. Positions 509–526 are enriched in low complexity; sequence TPPSSVPTSVISTPSTEE. The residue at position 538 (Ser-538) is a Phosphoserine. Residues 541 to 552 are compositionally biased toward basic and acidic residues; sequence ELKRPRLDENKG.

It belongs to the WD repeat HIR1 family. Subunit of the CAF-1 complex that contains RBBP4, CHAF1B and CHAF1A. CHAF1A binds directly to CHAF1B. Only minor amounts of RBBP4 are complexed with CHAF1A and CHAF1B in G1 phase. In G2 and S phase also monomeric CHAF1B is detected. Interacts with histones H3.1, H3.2 and H3.1t. In terms of processing, differentially phosphorylated during cell cycle. During mitosis the p60 subunit of inactive CAF-1 is hyperphosphorylated and displaced into the cytosol. Progressivly dephosphorylated from G1 to S and G2 phase. Phosphorylated p60 is recruited to chromatin undergoing DNA repair after UV irradiation in G1, S or G2 phases.

Its subcellular location is the nucleus. It localises to the cytoplasm. Functionally, acts as a component of the histone chaperone complex chromatin assembly factor 1 (CAF-1), which assembles histone octamers onto DNA during replication and repair. CAF-1 performs the first step of the nucleosome assembly process, bringing newly synthesized histones H3 and H4 to replicating DNA; histones H2A/H2B can bind to this chromatin precursor subsequent to DNA replication to complete the histone octamer. The polypeptide is Chromatin assembly factor 1 subunit B (Homo sapiens (Human)).